The sequence spans 349 residues: Phospho-N-acetylmuramoyl-pentapeptide-transferase (349 aa).

The next 10 helical transmembrane spans lie at 13 to 33, 69 to 89, 91 to 111, 129 to 149, 165 to 185, 197 to 217, 228 to 248, 252 to 272, 278 to 298, and 327 to 347; these read LFFS…SLGV, GGGV…LPWG, FSTW…WYDD, FMVQ…IYGS, LSLP…VAII, LDGL…FVAL, VAYV…YNGF, LFMG…CAVM, ILVV…LQVL, and IVMR…AAVL.

Belongs to the glycosyltransferase 4 family. MraY subfamily. Requires Mg(2+) as cofactor.

It is found in the cell inner membrane. The enzyme catalyses UDP-N-acetyl-alpha-D-muramoyl-L-alanyl-gamma-D-glutamyl-meso-2,6-diaminopimeloyl-D-alanyl-D-alanine + di-trans,octa-cis-undecaprenyl phosphate = di-trans,octa-cis-undecaprenyl diphospho-N-acetyl-alpha-D-muramoyl-L-alanyl-D-glutamyl-meso-2,6-diaminopimeloyl-D-alanyl-D-alanine + UMP. It functions in the pathway cell wall biogenesis; peptidoglycan biosynthesis. Functionally, catalyzes the initial step of the lipid cycle reactions in the biosynthesis of the cell wall peptidoglycan: transfers peptidoglycan precursor phospho-MurNAc-pentapeptide from UDP-MurNAc-pentapeptide onto the lipid carrier undecaprenyl phosphate, yielding undecaprenyl-pyrophosphoryl-MurNAc-pentapeptide, known as lipid I. The polypeptide is Phospho-N-acetylmuramoyl-pentapeptide-transferase (Chlamydia pneumoniae (Chlamydophila pneumoniae)).